Here is a 186-residue protein sequence, read N- to C-terminus: ATP synthase subunit delta, chloroplastic (186 aa).

It belongs to the ATPase delta chain family. In terms of assembly, F-type ATPases have 2 components, F(1) - the catalytic core - and F(0) - the membrane proton channel. F(1) has five subunits: alpha(3), beta(3), gamma(1), delta(1), epsilon(1). CF(0) has four main subunits: a(1), b(1), b'(1) and c(10-14). The alpha and beta chains form an alternating ring which encloses part of the gamma chain. F(1) is attached to F(0) by a central stalk formed by the gamma and epsilon chains, while a peripheral stalk is formed by the delta, b and b' chains.

It is found in the plastid. The protein resides in the chloroplast thylakoid membrane. Its function is as follows. F(1)F(0) ATP synthase produces ATP from ADP in the presence of a proton or sodium gradient. F-type ATPases consist of two structural domains, F(1) containing the extramembraneous catalytic core and F(0) containing the membrane proton channel, linked together by a central stalk and a peripheral stalk. During catalysis, ATP synthesis in the catalytic domain of F(1) is coupled via a rotary mechanism of the central stalk subunits to proton translocation. In terms of biological role, this protein is part of the stalk that links CF(0) to CF(1). It either transmits conformational changes from CF(0) to CF(1) or is implicated in proton conduction. This Pyropia yezoensis (Susabi-nori) protein is ATP synthase subunit delta, chloroplastic.